Here is a 317-residue protein sequence, read N- to C-terminus: Glycine--tRNA ligase alpha subunit (317 aa).

This sequence belongs to the class-II aminoacyl-tRNA synthetase family. Tetramer of two alpha and two beta subunits.

The protein resides in the cytoplasm. The enzyme catalyses tRNA(Gly) + glycine + ATP = glycyl-tRNA(Gly) + AMP + diphosphate. The sequence is that of Glycine--tRNA ligase alpha subunit from Pseudomonas fluorescens (strain ATCC BAA-477 / NRRL B-23932 / Pf-5).